Consider the following 314-residue polypeptide: Olfactory receptor 5P68 (314 aa).

The Extracellular segment spans residues 1 to 28; it reads MAFLHNGNHTAVTEFILLGLTDDPVFRV. An N-linked (GlcNAc...) asparagine glycan is attached at asparagine 8. A helical membrane pass occupies residues 29-49; sequence ILFTIILCIYLVTVSGNLSTI. At 50-57 the chain is on the cytoplasmic side; sequence LLIRVSSQ. A helical membrane pass occupies residues 58-78; it reads LHHPMYFFLSHLASVDIGYSS. Residues 79–102 are Extracellular-facing; it reads SVTPNMLANFLVEKNTISYLGCTI. Cysteine 100 and cysteine 192 are disulfide-bonded. A helical transmembrane segment spans residues 103 to 123; that stretch reads QLSLAAFCGTVECFLLATMAY. Residues 124–136 lie on the Cytoplasmic side of the membrane; the sequence is DRFMAICSPLLYS. The chain crosses the membrane as a helical span at residues 137 to 157; it reads TKMSTQVCIQLIVGSYIGGFL. The Extracellular portion of the chain corresponds to 158–199; sequence NASSFTLFFLSFLFCGPNRINHFYCDFAPLVALSCSDVSVSE. The chain crosses the membrane as a helical span at residues 200–220; that stretch reads VVTSFFSGSVTMITMLVIAIS. The Cytoplasmic portion of the chain corresponds to 221 to 240; that stretch reads YTYILITILKMRSTEGRHKA. The chain crosses the membrane as a helical span at residues 241–261; sequence FSTCTSHLTAVTLFYGTITFI. Topologically, residues 262–274 are extracellular; the sequence is YVMPKSSFSTDQN. A helical membrane pass occupies residues 275-295; that stretch reads KVVSVFYMVVIPMLNPLIYSL. Residues 296-314 are Cytoplasmic-facing; the sequence is RNNEIKDALKRHLGKKIFS.

It belongs to the G-protein coupled receptor 1 family.

It localises to the cell membrane. In terms of biological role, potential odorant receptor. This chain is Olfactory receptor 5P68, found in Mus musculus (Mouse).